Reading from the N-terminus, the 459-residue chain is MMTEKLNSGHTNLTSKGIINDLQIAGNTSDDMGWKSKLKLPPKDNRFKTTDVTDTRGNEFEEFCLKRELLMGIFEKGWERPSPIQEAAIPIALSGKDVLARAKNGTGKTGAYCIPVLEQIDPTKDYIQALVMVPTRELALQTSQICIELAKHLDIRVMVTTGGTILKDDILRIYQKVQLIIATPGRILDLMDKKVADMSHCRILVLDEADKLLSLDFQGMLDHVILKLPKDPQILLFSATFPLTVKNFMEKHLREPYEINLMEELTLKGVTQYYAFVQERQKVHCLNTLFSKLQINQSIIFCNSTQRVELLAKKITELGYCCYYIHAKMAQAHRNRVFHDFRQGLCRNLVCSDLFTRGIDVQAVNVVINFDFPRMAETYLHRIGRSGRFGHLGIAINLITYEDRFDLHRIEKELGTEIKPIPKVIDPALYVANVGASVGDTCNNSDLNNSANEEGNVSK.

The tract at residues 1–267 (MMTEKLNSGH…EINLMEELTL (267 aa)) is recA-like domain 1. Residues serine 8 and serine 29 each carry the phosphoserine modification. The Q motif motif lies at 58–86 (NEFEEFCLKRELLMGIFEKGWERPSPIQE). Positions 89–259 (IPIALSGKDV…EKHLREPYEI (171 aa)) constitute a Helicase ATP-binding domain. 102–109 (AKNGTGKT) contacts ATP. The DEAD box motif lies at 207 to 210 (DEAD). A gyf binding region spans residues 264 to 431 (ELTLKGVTQY…PKVIDPALYV (168 aa)). Residues 269–429 (GVTQYYAFVQ…PIPKVIDPAL (161 aa)) enclose the Helicase C-terminal domain. The segment at 432–459 (ANVGASVGDTCNNSDLNNSANEEGNVSK) is recA-like domain 2. Residue serine 450 is modified to Phosphoserine.

The protein belongs to the DEAD box helicase family. DDX6/DHH1 subfamily. As to quaternary structure, conserved component of different types of multiprotein ribonucleoprotein complexes (RNPs) that form distinct germ granules (P-body, nuage, sponge body or polar granules) and P-body-like neuronal RNPs. Consequently it interacts with a wide variety of proteins, some of which appear to be common interactive partners in almost all RNPs types i.e. cup and tral, whereas other interactions are specific to a germ granule/RNP. Core functional components in me31B-containing RNPs include RNA regulatory proteins (such as translational repressor, RNA-decapping and exonuclease proteins), RNA localization proteins and additional proteins depending on the biological context of the RNPs. In the P-body RNPs, interacts with at least the translation repressor proteins tral, cup and Edc3, and the mRNA localization factor yps. Interaction with tral or Edc3 is required for translation repression and possibly RNA decapping; binding to tral and Edc3 is mutually exclusive. In the nuage and germ plasm polar granule RNPs, interacts with at least tral, cup, and additional proteins required for assembly and function of the germ granules such as tud, vas and aub. Interacts (when dimethylated on Arg residues) with tud; interaction is RNA-independent. Component of the osk RNP complex, which is composed of at least me31B, exu, yps, aret/bruno, cup, and the mRNA of osk. Component of the nanos RNP complex, which is composed of at least smg, cup, tral, me31B, the CCR4-NOT complex members Rga/NOT2 and Caf1-55, and the mRNA of nanos (nos). Interacts with tral and piRNA pathway components papi and AGO3; promotes interaction between nuage RNPs and the piRNA-mediated transposon silencing. Forms a RNP containing at least me31B, eIF4E1, cup, tral and pAbp; this interaction is required for the translational silencing of maternal mRNAs during the maternal-to-zygotic transition. In the sponge body, forms a RNP containing at least me31B, exu, yps and the mRNA of osk; interactions with exu and yps are RNA dependent. Component of a neuronal RNP, at least composed of me31B, tral and Fmr1. Component of the Atx2-Not1 repressor complex, composed of at least me31B, Atx2, tyf and pAbp. Interacts (via the C-terminus) with Atx2, tyf, pAbp and Lsm12a. Interacts (via RecA-like domain 2) with 4EHP-GYF2 complex member Gyf (via the me31B binding motif). Interacts with 4E-T, Edc3 and Patr-1. In terms of processing, symmetrically dimethylated on arginine residues. As to expression, ubiquitously expressed throughout the brain (at protein level). Expressed in the olfactory system including the antennal lobes, projection neurons, local interneurons, mushroom-body Kenyon cells and glial cells (at protein level).

Its subcellular location is the cytoplasm. The protein localises to the cytoplasmic ribonucleoprotein granule. It is found in the P-body. The protein resides in the endoplasmic reticulum. It localises to the cell projection. Its subcellular location is the dendrite. It carries out the reaction ATP + H2O = ADP + phosphate + H(+). Its function is as follows. ATP-dependent RNA helicase which is a core component of a variety of ribonucleoprotein complexes (RNPs) that play critical roles in translational repression and mRNA decapping during embryogenesis, oogenesis, neurogenesis and neurotransmission. Recruits core components and translational repressors to some RNP complexes, and mediates RNP aggregation into processing granules such as P-bodies. As part of a RNP complex containing tral, eIF4E1, cup, and pAbp, involved in RNP-mediated translational repression of maternal mRNAs during oogenesis and embryogenesis. As part of a RNP complex containing tral and the RNA localization factors exu and yps, mediates translational silencing of mRNAs such as osk/oskar and bcd/bicoid during their transport to the oocyte in order to prevent their translation until they reach their positional destinations. In neurons and possibly imaginal disks, involved in miRNA-mediated translational repression, possibly in association with components of the piRNA transposon silencing pathway. Involved in RNA localization and protein trafficking in the oocyte. As part of an ER-associated RNP containing tral, cup and yps, required for tral-dependent ER exit site formation and consequently efficient trafficking of proteins such as grk and yl through the secretory pathway. Component of neuron RNPs that mediate transport and translation of neuronal RNAs, including translation repression of synaptic transcripts in preparation for their dendritic targeting. As part of the Atx2-Not1 repressor complex promotes Not1-dependent post-transcriptional gene silencing in adult circadian pacemaker neurons in order to sustain high-amplitude circadian rhythms and Pdf cycling in a per-independent manner. Promotes the interaction between Atx2 and Not1 within the Atx2-Not1 RNP complex. Recruited to the 4EHP-GYF2 complex by Gyf, where it plays a role in 4EHP-GYF2 mediated translational repression and mRNA decay. This Drosophila melanogaster (Fruit fly) protein is ATP-dependent RNA helicase me31b (me31B).